The chain runs to 274 residues: tRNA (guanine-N(7)-)-methyltransferase (274 aa).

The disordered stretch occupies residues 16 to 40 (ASASRGAATGSRGVAPAVPRGGAPA). Positions 106, 131, 158, and 181 each coordinate S-adenosyl-L-methionine. The active site involves aspartate 181. Substrate-binding positions include lysine 185, aspartate 217, and 252–255 (TKFE).

This sequence belongs to the class I-like SAM-binding methyltransferase superfamily. TrmB family.

It catalyses the reaction guanosine(46) in tRNA + S-adenosyl-L-methionine = N(7)-methylguanosine(46) in tRNA + S-adenosyl-L-homocysteine. It functions in the pathway tRNA modification; N(7)-methylguanine-tRNA biosynthesis. In terms of biological role, catalyzes the formation of N(7)-methylguanine at position 46 (m7G46) in tRNA. The protein is tRNA (guanine-N(7)-)-methyltransferase of Verminephrobacter eiseniae (strain EF01-2).